We begin with the raw amino-acid sequence, 305 residues long: MPGFTCCVPGCYNNSHRDKALHFYTFPKDAELRRLWLKNVSRAGVSGCFSTFQPTTGHRLCSVHFQGGRKTYTVRVPTIFPLRGVNERKVARRPAGAAAARRRQQQQQQQQQQQQQQQLQQQQPSPSSSTAQTTQLQPNLVSASAAVLLTLQAAVDSNQAPGSVVPVSTTPSGDDVKPIDLTVQVEFAAAEGAAAAAAASELEAATAGLEAAECTLGPQLVVVGEEGFPDTGSDHSYSLSSGTTEEELLRKLNEQRDILALMEVKMKEMKGSIRHLRLTEAKLREELREKDRLLAMAVIRKKHGM.

Residues 1 to 80 (MPGFTCCVPG…TYTVRVPTIF (80 aa)) form a THAP-type zinc finger. The tract at residues 85-135 (VNERKVARRPAGAAAARRRQQQQQQQQQQQQQQQLQQQQPSPSSSTAQTTQ) is disordered. Residues 105 to 135 (QQQQQQQQQQQQQQLQQQQPSPSSSTAQTTQ) show a composition bias toward low complexity. Residues 234 to 237 (DHSY) carry the HCFC1-binding motif (HBM) motif. Positions 246-296 (EELLRKLNEQRDILALMEVKMKEMKGSIRHLRLTEAKLREELREKDRLLAM) form a coiled coil.

The protein belongs to the THAP11 family. Forms homodimers. Interacts via HBM with HCFC1. Forms a complex with HCFC1 and ZNF143. Mainly expressed in embryonic pluripotent cells. In adult tissues, expressed in oocytes and in certain regions of the brain,including hippocampus, olfactory bulb and Purkinje cells.

It is found in the nucleus. Its subcellular location is the cytoplasm. Functionally, transcriptional repressor that plays a central role for embryogenesis and the pluripotency of embryonic stem (ES) cells. Sequence-specific DNA-binding factor that represses gene expression in pluripotent ES cells by directly binding to key genetic loci and recruiting epigenetic modifiers. Required for normal brain development and neural precursor differentiation. Transcription factor, which has both transcriptional activation and repression activities. Also modulates chromatin accessibility. In complex with HCFC1 and ZNF143, regulates the expression of several genes, including AP2S1, ESCO2, OPHN1, RBL1, UBXN8 and ZNF32. May regulate the expression of genes that encode both cytoplasmic and mitochondrial ribosomal proteins. Required for normal mitochondrial development and function. Regulates mitochondrial gene expression, including that of components of the electron transport chain. Involved in the maintainance of pluripotency in early embryonic cells, possibly through its action on mitochondrial maturation which is required to meet high energy demands of these cells. Required for early development of retina, preventing premature exit of retinal progenitor cells from the cell cycle. This effect may also be mediated by its action on mitochondria. Through the regulation of MMACHC gene expression, controls cobalamin metabolism. Required for normal brain development and neural precursor differentiation. Involved in cell growth. The protein is THAP domain-containing protein 11 (Thap11) of Mus musculus (Mouse).